The sequence spans 277 residues: Probable ketoamine kinase HMPREF0351_12196 (277 aa).

84 to 86 (EWI) contacts ATP. Asp186 serves as the catalytic Proton acceptor.

Belongs to the fructosamine kinase family.

It catalyses the reaction N(6)-(D-ribulosyl)-L-lysine + ATP = N(6)-(3-O-phospho-D-ribulosyl)-L-lysine + ADP + H(+). It carries out the reaction N-(D-ribulosyl)-cadaverine + ATP = N-(3-O-phospho-D-ribulosyl)-cadaverine + ADP + H(+). The catalysed reaction is N(6)-(D-erythrulosyl)-L-lysine + ATP = N(6)-(3-O-phospho-D-erythrulosyl)-L-lysine + ADP + H(+). The enzyme catalyses N-(D-erythrulosyl)-cadaverine + ATP = N-(3-O-phospho-D-erythrulosyl)-cadaverine + ADP + H(+). It catalyses the reaction N(6)-D-ribulosyl-L-lysyl-[protein] + ATP = N(6)-(3-O-phospho-D-ribulosyl)-L-lysyl-[protein] + ADP + H(+). It carries out the reaction N(6)-(D-erythrulosyl)-L-lysyl-[protein] + ATP = N(6)-(3-O-phospho-D-erythrulosyl)-L-lysyl-[protein] + ADP + H(+). In terms of biological role, ketoamine kinase that phosphorylates ketoamines, such as erythruloselysine, erythrulosecadaverine, ribuloselysine and ribulosecadaverine, on the third carbon of the sugar moiety to generate ketoamine 3-phosphate. Has higher activity on free lysine (erythruloselysine and ribuloselysine), than on ribuloselysine and erythruloselysine residues on glycated proteins. The protein is Probable ketoamine kinase HMPREF0351_12196 of Enterococcus faecium (strain ATCC BAA-472 / TX0016 / DO).